Here is a 411-residue protein sequence, read N- to C-terminus: MSISFDLTIDDTRDQLARHARASLEAKPSLIGMSREEMAAALIAAGVPERQVKMRISQLWHWLYVRGVSDFADMRNISKDLRAMLAQHFTIARPEVVEEQISQDGTRKWLFRFPPRGAGRPVEIESVYIPEEGRGTLCISSQVGCTLTCSFCHTGTQKLVRNLTSEEILAQLLTARDRLGDFPDKDTPDGAMVPAEGRKITNIVMMGMGEPLYNFEEVKKALLIASDGDGLSLSKRRITLSTSGVVPEIYRTGDEIGVMLAISLHAVRDELRDILVPINKKYPLAELIKACREYPGLSNAKRITFEYVMLKDINDSLDDAKLLVKLLQGIPAKINLIPFNPWPGTNYQCSDWEQIEKFADYVNAAGYASPIRTPRGRDILAACGQLKSESERLRKSERLALEAMMIAGHGE.

E125 serves as the catalytic Proton acceptor. Residues E131–L380 form the Radical SAM core domain. C138 and C383 form a disulfide bridge. [4Fe-4S] cluster-binding residues include C145, C149, and C152. S-adenosyl-L-methionine is bound by residues G209 to E210, S241, S263 to H265, and N340. C383 functions as the S-methylcysteine intermediate in the catalytic mechanism.

It belongs to the radical SAM superfamily. RlmN family. [4Fe-4S] cluster is required as a cofactor.

It is found in the cytoplasm. The enzyme catalyses adenosine(2503) in 23S rRNA + 2 reduced [2Fe-2S]-[ferredoxin] + 2 S-adenosyl-L-methionine = 2-methyladenosine(2503) in 23S rRNA + 5'-deoxyadenosine + L-methionine + 2 oxidized [2Fe-2S]-[ferredoxin] + S-adenosyl-L-homocysteine. It carries out the reaction adenosine(37) in tRNA + 2 reduced [2Fe-2S]-[ferredoxin] + 2 S-adenosyl-L-methionine = 2-methyladenosine(37) in tRNA + 5'-deoxyadenosine + L-methionine + 2 oxidized [2Fe-2S]-[ferredoxin] + S-adenosyl-L-homocysteine. Functionally, specifically methylates position 2 of adenine 2503 in 23S rRNA and position 2 of adenine 37 in tRNAs. m2A2503 modification seems to play a crucial role in the proofreading step occurring at the peptidyl transferase center and thus would serve to optimize ribosomal fidelity. The sequence is that of Dual-specificity RNA methyltransferase RlmN from Brucella canis (strain ATCC 23365 / NCTC 10854 / RM-666).